We begin with the raw amino-acid sequence, 110 residues long: Large ribosomal subunit protein uL22 (110 aa).

Belongs to the universal ribosomal protein uL22 family. In terms of assembly, part of the 50S ribosomal subunit.

Functionally, this protein binds specifically to 23S rRNA; its binding is stimulated by other ribosomal proteins, e.g. L4, L17, and L20. It is important during the early stages of 50S assembly. It makes multiple contacts with different domains of the 23S rRNA in the assembled 50S subunit and ribosome. Its function is as follows. The globular domain of the protein is located near the polypeptide exit tunnel on the outside of the subunit, while an extended beta-hairpin is found that lines the wall of the exit tunnel in the center of the 70S ribosome. This is Large ribosomal subunit protein uL22 from Buchnera aphidicola subsp. Schizaphis graminum (strain Sg).